The chain runs to 319 residues: Cytochrome f (319 aa).

An N-terminal signal peptide occupies residues 1 to 35 (MFQQMQKISLKLLKTTFLFLFATFILVGLPSTSQA). Residues Y36, C56, C59, and H60 each coordinate heme. Residues 285–305 (IQGLIAFFISVIIAQTFLVLK) form a helical membrane-spanning segment.

The protein belongs to the cytochrome f family. As to quaternary structure, the 4 large subunits of the cytochrome b6-f complex are cytochrome b6, subunit IV (17 kDa polypeptide, petD), cytochrome f and the Rieske protein, while the 4 small subunits are PetG, PetL, PetM and PetN. The complex functions as a dimer. It depends on heme as a cofactor.

Its subcellular location is the plastid. It localises to the chloroplast thylakoid membrane. In terms of biological role, component of the cytochrome b6-f complex, which mediates electron transfer between photosystem II (PSII) and photosystem I (PSI), cyclic electron flow around PSI, and state transitions. The chain is Cytochrome f from Chlorokybus atmophyticus (Soil alga).